The following is a 274-amino-acid chain: MKRINKVLLSLLCLVIAYAGYSQIIPTYSVDSVTIQNLLPNVDEDTLVLINIDNTIITPKSKLFRYQDNAYINFTKYLYSLAANNASVNKTIAKLIVQRQMMLVESQWVDLINKMKNQGATVLGLQEITAPCNLIENYERWLYTILYGLNINFTRKVNDKEVFRFNPSDAEAPIFYLGIIFTGNINKVNTLIEFLKIIPIPPKKIVIFANNKKDLENMDSYLSMVDIGYYGIEYFGWQMLPGSPDNQIAELQQSTFLNTGQWLEDDTAAKMLNK.

The N-terminal stretch at 1–19 (MKRINKVLLSLLCLVIAYA) is a signal peptide.

This is an uncharacterized protein from Rickettsia prowazekii (strain Madrid E).